The following is an 828-amino-acid chain: DNA gyrase subunit A (828 aa).

One can recognise a Topo IIA-type catalytic domain in the interval 32–497; the sequence is LPDVRDGLKP…EVLSLEDEDL (466 aa). The active-site O-(5'-phospho-DNA)-tyrosine intermediate is the Y120. Residues 524–530 carry the GyrA-box motif; the sequence is QKRGGRG.

This sequence belongs to the type II topoisomerase GyrA/ParC subunit family. As to quaternary structure, heterotetramer, composed of two GyrA and two GyrB chains. In the heterotetramer, GyrA contains the active site tyrosine that forms a transient covalent intermediate with DNA, while GyrB binds cofactors and catalyzes ATP hydrolysis.

Its subcellular location is the cytoplasm. It catalyses the reaction ATP-dependent breakage, passage and rejoining of double-stranded DNA.. A type II topoisomerase that negatively supercoils closed circular double-stranded (ds) DNA in an ATP-dependent manner to modulate DNA topology and maintain chromosomes in an underwound state. Negative supercoiling favors strand separation, and DNA replication, transcription, recombination and repair, all of which involve strand separation. Also able to catalyze the interconversion of other topological isomers of dsDNA rings, including catenanes and knotted rings. Type II topoisomerases break and join 2 DNA strands simultaneously in an ATP-dependent manner. The chain is DNA gyrase subunit A from Streptococcus pyogenes serotype M1.